The sequence spans 922 residues: Alpha-actinin, sarcomeric (922 aa).

The tract at residues 1 to 252 (MMENGGYVGQ…IMTYVSCYYH (252 aa)) is actin-binding. 2 Calponin-homology (CH) domains span residues 36–140 (KQQK…LRFA) and 149–255 (MTAK…HAFQ). Spectrin repeat units follow at residues 253-393 (AFQG…MVSD), 394-508 (ITNS…RCQR), 509-629 (ICDQ…SADL), and 630-742 (ISRK…TMET). 2 EF-hand domains span residues 776-811 (EQLT…LGYS) and 817-852 (QGDM…ESTD). 5 residues coordinate Ca(2+): Asp-789, Asn-791, Thr-793, Arg-795, and Glu-800.

The protein belongs to the alpha-actinin family. In terms of assembly, homodimer; antiparallel.

Functionally, F-actin cross-linking protein which is thought to anchor actin to a variety of intracellular structures. This is a bundling protein. The chain is Alpha-actinin, sarcomeric (Actn) from Anopheles gambiae (African malaria mosquito).